We begin with the raw amino-acid sequence, 108 residues long: Peptidyl-prolyl cis-trans isomerase Fkbp12 (108 aa).

The disordered stretch occupies residues 1 to 21; that stretch reads MGVQVVPIAPGDGSTYPKNGQ. The PPIase FKBP-type domain maps to 20–108; the sequence is GQKVTVHYTG…TFDVELLKVE (89 aa).

This sequence belongs to the FKBP-type PPIase family. FKBP1 subfamily.

It is found in the cytoplasm. The catalysed reaction is [protein]-peptidylproline (omega=180) = [protein]-peptidylproline (omega=0). In terms of biological role, PPIases accelerate the folding of proteins. It catalyzes the cis-trans isomerization of proline imidic peptide bonds in oligopeptides. Binds to ligand-free TGF beta type I receptor, from which it is released upon a ligand-induced, type II receptor mediated phosphorylation of the type I receptor. Binding is inhibitory to the signaling pathways of the TGF beta family ligands. This is Peptidyl-prolyl cis-trans isomerase Fkbp12 from Drosophila melanogaster (Fruit fly).